Reading from the N-terminus, the 657-residue chain is Threonine--tRNA ligase (657 aa).

The 61-residue stretch at 1–61 (MINVTLPDGS…EGDASVAIIT (61 aa)) folds into the TGS domain. The segment at 244–549 (DHRKLGAQLD…LIENYAGSFP (306 aa)) is catalytic. Residues C349, H400, and H526 each coordinate Zn(2+).

Belongs to the class-II aminoacyl-tRNA synthetase family. As to quaternary structure, homodimer. Requires Zn(2+) as cofactor.

The protein localises to the cytoplasm. It catalyses the reaction tRNA(Thr) + L-threonine + ATP = L-threonyl-tRNA(Thr) + AMP + diphosphate + H(+). Its function is as follows. Catalyzes the attachment of threonine to tRNA(Thr) in a two-step reaction: L-threonine is first activated by ATP to form Thr-AMP and then transferred to the acceptor end of tRNA(Thr). Also edits incorrectly charged L-seryl-tRNA(Thr). In Hyphomonas neptunium (strain ATCC 15444), this protein is Threonine--tRNA ligase.